Consider the following 500-residue polypeptide: Lysine--tRNA ligase (500 aa).

Positions 410 and 417 each coordinate Mg(2+).

The protein belongs to the class-II aminoacyl-tRNA synthetase family. In terms of assembly, homodimer. The cofactor is Mg(2+).

It is found in the cytoplasm. It carries out the reaction tRNA(Lys) + L-lysine + ATP = L-lysyl-tRNA(Lys) + AMP + diphosphate. This is Lysine--tRNA ligase from Shewanella baltica (strain OS155 / ATCC BAA-1091).